The following is a 362-amino-acid chain: Protein RecA (362 aa).

77–84 serves as a coordination point for ATP; it reads GPESSGKT.

The protein belongs to the RecA family.

It localises to the cytoplasm. In terms of biological role, can catalyze the hydrolysis of ATP in the presence of single-stranded DNA, the ATP-dependent uptake of single-stranded DNA by duplex DNA, and the ATP-dependent hybridization of homologous single-stranded DNAs. It interacts with LexA causing its activation and leading to its autocatalytic cleavage. The chain is Protein RecA from Rhizobium etli (strain ATCC 51251 / DSM 11541 / JCM 21823 / NBRC 15573 / CFN 42).